The chain runs to 213 residues: MVNKLEQELTQKLEILLKQTALSISDQQKNKLVQLVLLLNKWNKAYNLTSVRDPMEMLIKHILDSVVVSPYLQGDLFIDVGTGPGLPGLPLAIINPDKNFVLLDSLGKRISFIRNAVRELELSNVVPVLSRVEEYIPDHKFDGILSRAFAILKDMTDWCHHLPNEKGLFYALKGVYQQEEVMDMSNNFQVIDVIKLHVPELIGERHLVKVKKM.

Residues G81, L86, V132–E133, and R147 each bind S-adenosyl-L-methionine.

The protein belongs to the methyltransferase superfamily. RNA methyltransferase RsmG family.

The protein resides in the cytoplasm. The enzyme catalyses guanosine(527) in 16S rRNA + S-adenosyl-L-methionine = N(7)-methylguanosine(527) in 16S rRNA + S-adenosyl-L-homocysteine. Specifically methylates the N7 position of guanine in position 527 of 16S rRNA. This Mannheimia succiniciproducens (strain KCTC 0769BP / MBEL55E) protein is Ribosomal RNA small subunit methyltransferase G.